The primary structure comprises 215 residues: Probable transaldolase (215 aa).

The active-site Schiff-base intermediate with substrate is lysine 83.

This sequence belongs to the transaldolase family. Type 3B subfamily.

The protein resides in the cytoplasm. The catalysed reaction is D-sedoheptulose 7-phosphate + D-glyceraldehyde 3-phosphate = D-erythrose 4-phosphate + beta-D-fructose 6-phosphate. The protein operates within carbohydrate degradation; pentose phosphate pathway; D-glyceraldehyde 3-phosphate and beta-D-fructose 6-phosphate from D-ribose 5-phosphate and D-xylulose 5-phosphate (non-oxidative stage): step 2/3. In terms of biological role, transaldolase is important for the balance of metabolites in the pentose-phosphate pathway. The polypeptide is Probable transaldolase (Methanococcus vannielii (strain ATCC 35089 / DSM 1224 / JCM 13029 / OCM 148 / SB)).